The following is a 177-amino-acid chain: ATP synthase subunit delta, chloroplastic (177 aa).

Belongs to the ATPase delta chain family. In terms of assembly, F-type ATPases have 2 components, F(1) - the catalytic core - and F(0) - the membrane proton channel. F(1) has five subunits: alpha(3), beta(3), gamma(1), delta(1), epsilon(1). CF(0) has four main subunits: a(1), b(1), b'(1) and c(10-14). The alpha and beta chains form an alternating ring which encloses part of the gamma chain. F(1) is attached to F(0) by a central stalk formed by the gamma and epsilon chains, while a peripheral stalk is formed by the delta, b and b' chains.

It is found in the plastid. The protein resides in the chloroplast thylakoid membrane. Functionally, f(1)F(0) ATP synthase produces ATP from ADP in the presence of a proton or sodium gradient. F-type ATPases consist of two structural domains, F(1) containing the extramembraneous catalytic core and F(0) containing the membrane proton channel, linked together by a central stalk and a peripheral stalk. During catalysis, ATP synthesis in the catalytic domain of F(1) is coupled via a rotary mechanism of the central stalk subunits to proton translocation. This protein is part of the stalk that links CF(0) to CF(1). It either transmits conformational changes from CF(0) to CF(1) or is implicated in proton conduction. This is ATP synthase subunit delta, chloroplastic from Galdieria sulphuraria (Red alga).